A 635-amino-acid chain; its full sequence is Paraneoplastic antigen-like protein 8B (635 aa).

Disordered regions lie at residues 115 to 202 (PTQA…DESL), 260 to 332 (TDKS…NPEF), and 492 to 635 (AARE…PKCR). Positions 133-147 (SETQAQDSGEVTGQA) are enriched in polar residues. Over residues 156–183 (NPRRGRRGRRNRTRRNRLTQKGKKRSRG) the composition is skewed to basic residues. Over residues 261–273 (DKSKKEEAEKEPA) the composition is skewed to basic and acidic residues. Composition is skewed to acidic residues over residues 302-329 (PDEE…ELDN) and 502-524 (GSEE…EASE). Residues 531–540 (RKPRAKRART) show a composition bias toward basic residues. The span at 541–557 (APRGLTPAGAPPTASGA) shows a compositional bias: low complexity. Basic residues-rich tracts occupy residues 558–568 (RKTRAGGRGRG) and 619–635 (ARGK…PKCR).

The protein belongs to the PNMA family.

The chain is Paraneoplastic antigen-like protein 8B from Homo sapiens (Human).